We begin with the raw amino-acid sequence, 125 residues long: Large ribosomal subunit protein bL17 (125 aa).

This sequence belongs to the bacterial ribosomal protein bL17 family. As to quaternary structure, part of the 50S ribosomal subunit. Contacts protein L32.

This Acinetobacter baumannii (strain AB0057) protein is Large ribosomal subunit protein bL17.